The following is a 150-amino-acid chain: Phosphoribosyl-AMP cyclohydrolase (150 aa).

A Mg(2+)-binding site is contributed by aspartate 92. Zn(2+) is bound at residue cysteine 93. Positions 94 and 96 each coordinate Mg(2+). Zn(2+) is bound by residues cysteine 111 and cysteine 118.

Belongs to the PRA-CH family. As to quaternary structure, homodimer. Requires Mg(2+) as cofactor. It depends on Zn(2+) as a cofactor.

Its subcellular location is the cytoplasm. The enzyme catalyses 1-(5-phospho-beta-D-ribosyl)-5'-AMP + H2O = 1-(5-phospho-beta-D-ribosyl)-5-[(5-phospho-beta-D-ribosylamino)methylideneamino]imidazole-4-carboxamide. It participates in amino-acid biosynthesis; L-histidine biosynthesis; L-histidine from 5-phospho-alpha-D-ribose 1-diphosphate: step 3/9. Catalyzes the hydrolysis of the adenine ring of phosphoribosyl-AMP. The protein is Phosphoribosyl-AMP cyclohydrolase of Agrobacterium fabrum (strain C58 / ATCC 33970) (Agrobacterium tumefaciens (strain C58)).